The sequence spans 585 residues: Frizzled-10 (585 aa).

Positions 1–24 (MGPAAGNLVRAVLALCWLAEHCAG) are cleaved as a signal peptide. The Extracellular segment spans residues 25–229 (ISSIDIERPG…DVYWSKDDKQ (205 aa)). In terms of domain architecture, FZ spans 33–154 (PGDGRCQPIE…NDPNYLCMEA (122 aa)). Disulfide bonds link Cys38–Cys99, Cys46–Cys92, Cys83–Cys121, Cys110–Cys151, and Cys114–Cys138. Asn52 is a glycosylation site (N-linked (GlcNAc...) asparagine). The segment at 155 to 195 (PNNGSDEPPRGSSMLPPMFRPQRPSTGHDLQQHKDSLSRTS) is disordered. The N-linked (GlcNAc...) asparagine glycan is linked to Asn157. Residues 230 to 250 (FAVIWIAIWSILCFFSSAFTV) traverse the membrane as a helical segment. The Cytoplasmic segment spans residues 251-265 (LTFLIDPQRFKYPER). Residues 266–286 (PIIFLSMCYCVYSVGYIIRLF) form a helical membrane-spanning segment. At 287 to 314 (SGAESIACDRDSGQLYVIQEGLESTGCT) the chain is on the extracellular side. Residues 315 to 335 (IVFLVLYYFGMASSLWWVILT) form a helical membrane-spanning segment. Over 336-355 (LTWFLAAGKKWGHEAIEANS) the chain is Cytoplasmic. A helical transmembrane segment spans residues 356-376 (SYFHLAAWAIPAVKTIMILVM). Topologically, residues 377–397 (RRVAGDELTGLCYVGSMDVNA) are extracellular. A helical transmembrane segment spans residues 398–418 (LTGFVLIPLACYLIIGTSFIL). The Cytoplasmic portion of the chain corresponds to 419–447 (SGFVALFHIRRVMKTGGENTDKLEKLMVR). The chain crosses the membrane as a helical span at residues 448–468 (IGVFSVLYTVPATCVIACYFY). Residues 469–506 (ERLNMDYWKIVASQQKCKMNNQTKNLDCMMNNSIPAVE) lie on the Extracellular side of the membrane. N-linked (GlcNAc...) asparagine glycosylation is found at Asn489 and Asn499. A helical transmembrane segment spans residues 507–527 (IFMVKIFMLLVVGITSGMWIW). Residues 528 to 585 (TSKTLQSWQNVCSRRLKKRSRRKPASVITSSGIYKKPQHPQKTHLAKYESTLQPPTCV) lie on the Cytoplasmic side of the membrane. The short motif at 530 to 535 (KTLQSW) is the Lys-Thr-X-X-X-Trp motif, mediates interaction with the PDZ domain of Dvl family members element. The PDZ-binding signature appears at 583–585 (TCV).

This sequence belongs to the G-protein coupled receptor Fz/Smo family. In terms of assembly, interacts with WNT7A. In terms of tissue distribution, expressed in the dorsal ectoderm overlying the developing spinal cord.

Its subcellular location is the cell membrane. In terms of biological role, receptor for Wnt proteins. Functions in the canonical Wnt/beta-catenin signaling pathway. Activation by WNT7A induces expression of beta-catenin target genes. The canonical Wnt/beta-catenin signaling pathway leads to the activation of disheveled proteins, inhibition of GSK-3 kinase, nuclear accumulation of beta-catenin and activation of Wnt target genes. A second signaling pathway involving PKC and calcium fluxes has been seen for some family members, but it is not yet clear if it represents a distinct pathway or if it can be integrated in the canonical pathway, as PKC seems to be required for Wnt-mediated inactivation of GSK-3 kinase. Both pathways seem to involve interactions with G-proteins. May be involved in transduction and intercellular transmission of polarity information during tissue morphogenesis and/or in differentiated tissues. The polypeptide is Frizzled-10 (FZD10) (Gallus gallus (Chicken)).